Reading from the N-terminus, the 260-residue chain is Histidinol-phosphatase (260 aa).

Mg(2+)-binding residues include glutamate 67, aspartate 83, isoleucine 85, and aspartate 86. Residue glutamate 67 coordinates substrate. Residues 85 to 88, arginine 185, and aspartate 213 contribute to the substrate site; that span reads IDGT. Residue aspartate 213 participates in Mg(2+) binding.

It belongs to the inositol monophosphatase superfamily. Requires Mg(2+) as cofactor.

It carries out the reaction L-histidinol phosphate + H2O = L-histidinol + phosphate. Its pathway is amino-acid biosynthesis; L-histidine biosynthesis; L-histidine from 5-phospho-alpha-D-ribose 1-diphosphate: step 8/9. Catalyzes the dephosphorylation of histidinol-phosphate to histidinol, the direct precursor of histidine. This is Histidinol-phosphatase (hisN) from Mycobacterium tuberculosis (strain ATCC 25618 / H37Rv).